A 262-amino-acid polypeptide reads, in one-letter code: MGAQLCFEANAKAPREALRFHAEAKGAQVRLDTRGCIAHRRTTFHDGIVFSQRPVRLGERVALRVLREESGWCGGLRVGFTRLDPACVSVPSLPPFLCPDLEEQSPTWAAVLPEGCALTGDLVRFWVDRRGCLFAKVNAGCRLLLREGVPVGAPLWAVMDVYGTTKAIELLDPTASRLPTPMPWDLSNKAVPEPKATPGEECAICFYHAANTRLVPCGHTYFCRYCAWRVFSDTAKCPVCRWQIEAVAPAQGPPALRVEEGS.

The region spanning 17 to 173 (ALRFHAEAKG…TTKAIELLDP (157 aa)) is the NHR domain. The RING-type zinc finger occupies 202 to 241 (CAICFYHAANTRLVPCGHTYFCRYCAWRVFSDTAKCPVCR).

In terms of assembly, (Microbial infection) Interacts with hepatitis C virus protein E1; this interaction prevents E1 interaction with E2 and subsequently inhibits viral infection.

Its subcellular location is the cytoplasm. It carries out the reaction S-ubiquitinyl-[E2 ubiquitin-conjugating enzyme]-L-cysteine + [acceptor protein]-L-lysine = [E2 ubiquitin-conjugating enzyme]-L-cysteine + N(6)-ubiquitinyl-[acceptor protein]-L-lysine.. It participates in protein modification; protein ubiquitination. Functionally, E3 ubiquitin-protein ligase that plays a role in various biological processes such as lung development or innate immunity. Seems to utilize UBE2E1. Promotes innate antiviral response by catalyzing 'Lys-63'-linked ubiquitination of IRF7. Also inhibits hepatitis C virus assembly by directly binding to viral E1 envelope glycoprotein to disrupt its interaction with E2. Plays an essential role in TLR4-mediated activation of MAPK pathways by promoting 'Lys-48'-linked polyubiquitination of the phosphatase DUSP1/MKP1. The sequence is that of E3 ubiquitin-protein ligase NEURL3 (NEURL3) from Homo sapiens (Human).